Here is a 512-residue protein sequence, read N- to C-terminus: Probable amidase At4g34880 (512 aa).

Catalysis depends on charge relay system residues Lys-117 and Ser-198. Ser-222 functions as the Acyl-ester intermediate in the catalytic mechanism.

The protein belongs to the amidase family. Expressed in vasculature of roots, cotyledons, leaves and sepals.

The catalysed reaction is a monocarboxylic acid amide + H2O = a monocarboxylate + NH4(+). The chain is Probable amidase At4g34880 from Arabidopsis thaliana (Mouse-ear cress).